A 294-amino-acid polypeptide reads, in one-letter code: Acetylglutamate kinase (294 aa).

Substrate contacts are provided by residues 63–64 (GG), Arg-85, and Asn-188.

Belongs to the acetylglutamate kinase family. ArgB subfamily.

It is found in the cytoplasm. It catalyses the reaction N-acetyl-L-glutamate + ATP = N-acetyl-L-glutamyl 5-phosphate + ADP. It functions in the pathway amino-acid biosynthesis; L-arginine biosynthesis; N(2)-acetyl-L-ornithine from L-glutamate: step 2/4. Catalyzes the ATP-dependent phosphorylation of N-acetyl-L-glutamate. The polypeptide is Acetylglutamate kinase (Methanococcus maripaludis (strain C5 / ATCC BAA-1333)).